A 343-amino-acid polypeptide reads, in one-letter code: Ferredoxin--NADP reductase (343 aa).

FAD contacts are provided by Asp31, Lys39, Tyr43, Val83, Ile118, Asp285, and Ser326.

This sequence belongs to the ferredoxin--NADP reductase type 2 family. Homodimer. Requires FAD as cofactor.

The enzyme catalyses 2 reduced [2Fe-2S]-[ferredoxin] + NADP(+) + H(+) = 2 oxidized [2Fe-2S]-[ferredoxin] + NADPH. The polypeptide is Ferredoxin--NADP reductase (Staphylococcus saprophyticus subsp. saprophyticus (strain ATCC 15305 / DSM 20229 / NCIMB 8711 / NCTC 7292 / S-41)).